We begin with the raw amino-acid sequence, 680 residues long: Methionine--tRNA ligase (680 aa).

A 'HIGH' region motif is present at residues 15-25; that stretch reads PYANGSIHLGH. Residues C146, C149, C159, and C162 each contribute to the Zn(2+) site. The 'KMSKS' region motif lies at 332-336; that stretch reads KMSKS. K335 lines the ATP pocket. A tRNA-binding domain is found at 579–680; sequence DFAKVDMRIA…EGAQPGMRVM (102 aa).

The protein belongs to the class-I aminoacyl-tRNA synthetase family. MetG type 1 subfamily. As to quaternary structure, homodimer. It depends on Zn(2+) as a cofactor.

It localises to the cytoplasm. It catalyses the reaction tRNA(Met) + L-methionine + ATP = L-methionyl-tRNA(Met) + AMP + diphosphate. In terms of biological role, is required not only for elongation of protein synthesis but also for the initiation of all mRNA translation through initiator tRNA(fMet) aminoacylation. This Photobacterium profundum (strain SS9) protein is Methionine--tRNA ligase.